A 252-amino-acid polypeptide reads, in one-letter code: Sugar fermentation stimulation protein homolog (252 aa).

It belongs to the SfsA family.

This chain is Sugar fermentation stimulation protein homolog, found in Picosynechococcus sp. (strain ATCC 27264 / PCC 7002 / PR-6) (Agmenellum quadruplicatum).